A 964-amino-acid chain; its full sequence is Fanconi-associated nuclease 1 homolog (964 aa).

The disordered stretch occupies residues 31-56 (SRSLQDDAADAEREAAAGGSSSGGGD). The segment at 63–92 (WVACPVCGESIRGTDYCVNTHLDICLTRGT) adopts a UBZ4-type zinc-finger fold. Zn(2+) contacts are provided by Cys66, Cys69, His83, and Cys87. Positions 786, 907, 926, and 927 each coordinate Mn(2+). One can recognise a VRR-NUC domain in the interval 844-958 (GIAEEILISS…GFDVEVCKVS (115 aa)).

Belongs to the FAN1 family. Mn(2+) is required as a cofactor. It depends on Mg(2+) as a cofactor.

It carries out the reaction Hydrolytically removes 5'-nucleotides successively from the 3'-hydroxy termini of 3'-hydroxy-terminated oligonucleotides.. In terms of biological role, nuclease required for the repair of DNA interstrand cross-links (ICL). Acts as a 5'-3' exonuclease that anchors at a cut end of DNA and cleaves DNA successively at every third nucleotide, allowing to excise an ICL from one strand through flanking incisions. This is Fanconi-associated nuclease 1 homolog from Oryza sativa subsp. japonica (Rice).